We begin with the raw amino-acid sequence, 225 residues long: NAD(P)H-hydrate epimerase (225 aa).

In terms of domain architecture, YjeF N-terminal spans 9-209 (MQTIDNYTVE…DIGLLTPQDF (201 aa)). 57–61 (NNGAD) lines the (6S)-NADPHX pocket. Asn-58 and Asp-119 together coordinate K(+). (6S)-NADPHX-binding positions include 123–129 (GTGLNNL) and Asp-152. Thr-155 serves as a coordination point for K(+).

The protein belongs to the NnrE/AIBP family. It depends on K(+) as a cofactor.

It catalyses the reaction (6R)-NADHX = (6S)-NADHX. It carries out the reaction (6R)-NADPHX = (6S)-NADPHX. In terms of biological role, catalyzes the epimerization of the S- and R-forms of NAD(P)HX, a damaged form of NAD(P)H that is a result of enzymatic or heat-dependent hydration. This is a prerequisite for the S-specific NAD(P)H-hydrate dehydratase to allow the repair of both epimers of NAD(P)HX. The protein is NAD(P)H-hydrate epimerase of Leuconostoc sp. (strain C2).